The following is a 449-amino-acid chain: Xylose isomerase (449 aa).

Catalysis depends on residues His-103 and Asp-106. Mg(2+)-binding residues include Glu-234, Glu-270, His-273, Asp-298, Asp-309, Asp-311, and Asp-342.

This sequence belongs to the xylose isomerase family. In terms of assembly, homotetramer. The cofactor is Mg(2+).

The protein localises to the cytoplasm. The catalysed reaction is alpha-D-xylose = alpha-D-xylulofuranose. In terms of biological role, involved in D-xylose catabolism. In Lactiplantibacillus pentosus (Lactobacillus pentosus), this protein is Xylose isomerase (xylA).